Here is a 58-residue protein sequence, read N- to C-terminus: Large ribosomal subunit protein bL32 (58 aa).

Residues 1 to 20 (MALPKHKKSKSKRDKRRTHQ) show a composition bias toward basic residues. The segment at 1–26 (MALPKHKKSKSKRDKRRTHQKLTAPN) is disordered.

It belongs to the bacterial ribosomal protein bL32 family.

This is Large ribosomal subunit protein bL32 from Desulfatibacillum aliphaticivorans.